We begin with the raw amino-acid sequence, 339 residues long: Dihydroorotate dehydrogenase (quinone) (339 aa).

FMN-binding positions include 61 to 65 (AGLDK) and threonine 85. Substrate is bound at residue lysine 65. 110–114 (NRMGF) is a substrate binding site. FMN-binding residues include asparagine 138 and asparagine 171. Residue asparagine 171 participates in substrate binding. The active-site Nucleophile is the serine 174. Asparagine 176 lines the substrate pocket. The FMN site is built by lysine 216 and threonine 244. Residue 245 to 246 (NT) coordinates substrate. FMN contacts are provided by residues glycine 267, glycine 296, and 317 to 318 (YS).

The protein belongs to the dihydroorotate dehydrogenase family. Type 2 subfamily. As to quaternary structure, monomer. FMN is required as a cofactor.

It is found in the cell membrane. It catalyses the reaction (S)-dihydroorotate + a quinone = orotate + a quinol. Its pathway is pyrimidine metabolism; UMP biosynthesis via de novo pathway; orotate from (S)-dihydroorotate (quinone route): step 1/1. Its function is as follows. Catalyzes the conversion of dihydroorotate to orotate with quinone as electron acceptor. The protein is Dihydroorotate dehydrogenase (quinone) of Saccharophagus degradans (strain 2-40 / ATCC 43961 / DSM 17024).